Consider the following 566-residue polypeptide: Oxygen-dependent choline dehydrogenase (566 aa).

7-36 (DYIICGAGSAGNVLATRLTEDPDVTVLLLE) contacts FAD. A disordered region spans residues 180 to 202 (NGYQQEGFGPMDRTVTPKGRRAS). H474 serves as the catalytic Proton acceptor.

It belongs to the GMC oxidoreductase family. Requires FAD as cofactor.

The enzyme catalyses choline + A = betaine aldehyde + AH2. The catalysed reaction is betaine aldehyde + NAD(+) + H2O = glycine betaine + NADH + 2 H(+). It participates in amine and polyamine biosynthesis; betaine biosynthesis via choline pathway; betaine aldehyde from choline (cytochrome c reductase route): step 1/1. Involved in the biosynthesis of the osmoprotectant glycine betaine. Catalyzes the oxidation of choline to betaine aldehyde and betaine aldehyde to glycine betaine at the same rate. This chain is Oxygen-dependent choline dehydrogenase, found in Burkholderia lata (strain ATCC 17760 / DSM 23089 / LMG 22485 / NCIMB 9086 / R18194 / 383).